We begin with the raw amino-acid sequence, 181 residues long: NADH-quinone oxidoreductase subunit B (181 aa).

[4Fe-4S] cluster contacts are provided by C60, C61, C125, and C155.

The protein belongs to the complex I 20 kDa subunit family. As to quaternary structure, NDH-1 is composed of 14 different subunits. Subunits NuoB, C, D, E, F, and G constitute the peripheral sector of the complex. The cofactor is [4Fe-4S] cluster.

It localises to the cell inner membrane. It carries out the reaction a quinone + NADH + 5 H(+)(in) = a quinol + NAD(+) + 4 H(+)(out). NDH-1 shuttles electrons from NADH, via FMN and iron-sulfur (Fe-S) centers, to quinones in the respiratory chain. Couples the redox reaction to proton translocation (for every two electrons transferred, four hydrogen ions are translocated across the cytoplasmic membrane), and thus conserves the redox energy in a proton gradient. The polypeptide is NADH-quinone oxidoreductase subunit B (Novosphingobium aromaticivorans (strain ATCC 700278 / DSM 12444 / CCUG 56034 / CIP 105152 / NBRC 16084 / F199)).